A 33-amino-acid polypeptide reads, in one-letter code: NAD-reducing hydrogenase HoxS subunit gamma (33 aa).

The region spanning 1-33 (SIEIEIDGVTVTTEESRTLVDVAAEAGVYIPTL) is the 2Fe-2S ferredoxin-type domain.

Belongs to the complex I 75 kDa subunit family. Tetramer of an alpha and a gamma subunits (flavin-containing dimer), and a delta and a nickel-containing beta subunits (hydrogenase dimer). [4Fe-4S] cluster serves as cofactor.

It localises to the cytoplasm. The enzyme catalyses H2 + NAD(+) = NADH + H(+). Its function is as follows. Subunits alpha and gamma of HoxS constitute an NADH--oxidoreductase. This Rhodococcus opacus (Nocardia opaca) protein is NAD-reducing hydrogenase HoxS subunit gamma (hoxU).